The primary structure comprises 835 residues: MAAPILKDVVAYVEVWSSNGTENYSKTFTTQLVDMGAKVSKTFNKQVTHVIFKDGYQSTWDKAQKRGVKLVSVLWVEKCRTAGAHIDESLFPAANMNEHLSSLIKKKRKCMQPKDFNFKTPENDKRFQKKFEKMAKELQRQKTNLDDDVPILLFESNGSLIYTPTIEINSRHHSAMEKRLQEMKEKRENLSPTSSQMIQQSHDNPSNSLCEAPLNISRDTLCSDEYFAGGLHSSFDDLCGNSGCGNQERKLEGSINDIKSDVCISSLVLKANNIHSSPSFTHLDKSSPQKFLSNLSKEEINLQRNIAGKVVTPDQKQAAGMSQETFEEKYRLSPTLSSTKGHLLIHSRPRSSSVKRKRVSHGSHSPPKEKCKRKRSTRRSIMPRLQLCRSEDRLQHVAGPALEALSCGESSYDDYFSPDNLKERYSENLPPESQLPSSPAQLSCRSLSKKERTSIFEMSDFSCVGKKTRTVDITNFTAKTISSPRKTGNGEGRATSSCVTSAPEEALRCCRQAGKEDACPEGNGFSYTIEDPALPKGHDDDLTPLEGSLEEMKEAVGLKSTQNKGTTSKISNSSEGEAQSEHEPCFIVDCNMETSTEEKENLPGGYSGSVKNRPTRHDVLDDSCDGFKDLIKPHEELKKSGRGKKPTRTLVMTSMPSEKQNVVIQVVDKLKGFSIAPDVCETTTHVLSGKPLRTLNVLLGIARGCWVLSYDWVLWSLELGHWISEEPFELSHHFPAAPLCRSECHLSAGPYRGTLFADQPAMFVSPASSPPVAKLCELVHLCGGRVSQVPRQASIVIGPYSGKKKATVKYLSEKWVLDSITQHKVCAPENYLLSQ.

In terms of domain architecture, BRCT 1 spans 1 to 93 (MAAPILKDVV…AHIDESLFPA (93 aa)). Residues serine 279, serine 287, serine 296, and serine 333 each carry the phosphoserine modification. 2 disordered regions span residues 313 to 381 (PDQK…RRSI) and 419 to 443 (DNLK…AQLS). Position 335 is a phosphothreonine (threonine 335). Residues 343–361 (LLIHSRPRSSSVKRKRVSH) show a composition bias toward basic residues. Residues 434–443 (QLPSSPAQLS) show a composition bias toward polar residues. A Phosphoserine modification is found at serine 548. The segment at 555 to 584 (AVGLKSTQNKGTTSKISNSSEGEAQSEHEP) is disordered. The span at 559 to 577 (KSTQNKGTTSKISNSSEGE) shows a compositional bias: polar residues. 2 consecutive BRCT domains span residues 640-730 (SGRG…PFEL) and 751-833 (YRGT…NYLL).

Interacts with CDC27 and maybe other components of the APC/C complex. Interacts with histone variant H2AX under DNA damage conditions. As to expression, expressed in fetal brain, liver and kidney.

Its subcellular location is the cytoplasm. The protein localises to the cytoskeleton. It localises to the microtubule organizing center. The protein resides in the centrosome. Its function is as follows. Implicated in chromosome condensation and DNA damage induced cellular responses. May play a role in neurogenesis and regulation of the size of the cerebral cortex. The chain is Microcephalin from Homo sapiens (Human).